We begin with the raw amino-acid sequence, 237 residues long: (5-formylfuran-3-yl)methyl phosphate synthase (237 aa).

Lys-29 serves as the catalytic Schiff-base intermediate with substrate. Lys-87 functions as the Proton acceptor in the catalytic mechanism.

Belongs to the MfnB family.

The enzyme catalyses 2 D-glyceraldehyde 3-phosphate = 4-(hydroxymethyl)-2-furancarboxaldehyde phosphate + phosphate + 2 H2O. Its pathway is cofactor biosynthesis; methanofuran biosynthesis. Its function is as follows. Catalyzes the formation of 4-(hydroxymethyl)-2-furancarboxaldehyde phosphate (4-HFC-P) from two molecules of glyceraldehyde-3-P (GA-3-P). This Methanopyrus kandleri (strain AV19 / DSM 6324 / JCM 9639 / NBRC 100938) protein is (5-formylfuran-3-yl)methyl phosphate synthase.